The primary structure comprises 310 residues: Putative type II methyltransferase M.MJ0563P (310 aa).

The 310-residue stretch at 1–310 folds into the SAM-dependent MTase C5-type domain; the sequence is MNVIDLFSGC…AIAKEIKKQL (310 aa). Cys-77 is a catalytic residue.

Belongs to the class I-like SAM-binding methyltransferase superfamily. C5-methyltransferase family.

It catalyses the reaction a 2'-deoxycytidine in DNA + S-adenosyl-L-methionine = a 5-methyl-2'-deoxycytidine in DNA + S-adenosyl-L-homocysteine + H(+). Its function is as follows. A putative methylase that may protect DNA from cleavage by an unknown endonuclease. This is Putative type II methyltransferase M.MJ0563P from Methanocaldococcus jannaschii (strain ATCC 43067 / DSM 2661 / JAL-1 / JCM 10045 / NBRC 100440) (Methanococcus jannaschii).